The sequence spans 233 residues: Large ribosomal subunit protein uL1 (233 aa).

It belongs to the universal ribosomal protein uL1 family. In terms of assembly, part of the 50S ribosomal subunit.

Functionally, binds directly to 23S rRNA. The L1 stalk is quite mobile in the ribosome, and is involved in E site tRNA release. Its function is as follows. Protein L1 is also a translational repressor protein, it controls the translation of the L11 operon by binding to its mRNA. This Shewanella oneidensis (strain ATCC 700550 / JCM 31522 / CIP 106686 / LMG 19005 / NCIMB 14063 / MR-1) protein is Large ribosomal subunit protein uL1.